Consider the following 529-residue polypeptide: Heat shock protein 60 (529 aa).

The interval 460–484 (YQATVQHPPPQSSYEEDGRRPPTQP) is disordered.

This is Heat shock protein 60 from Giardia intestinalis (Giardia lamblia).